Consider the following 1303-residue polypeptide: Ninein-like protein (1303 aa).

EF-hand domains follow at residues 8 to 43 (RYVA…LSLD) and 61 to 77 (RVNF…VLSR). The segment at 107–135 (TKRYGRRSRPDKTDLELTADSDSLPFGTD) is disordered. EF-hand domains are found at residues 203–238 (VTDG…IGLK) and 240–275 (LEAE…PHDH). Residues Asp-253, Asp-255, Asp-257, Lys-259, and Glu-264 each contribute to the Ca(2+) site. Residues 464–590 (EYESEVLLEQ…CSELELLKSQ (127 aa)) adopt a coiled-coil conformation. A compositionally biased stretch (polar residues) spans 592 to 617 (SGKRTRLSRSSLPANDWSNRRALTTE). The disordered stretch occupies residues 592–634 (SGKRTRLSRSSLPANDWSNRRALTTESDSDDPEMKKGTSPQVR). 3 coiled-coil regions span residues 660–791 (ELAM…LEAE), 821–876 (LAVL…LSAR), and 919–1146 (SKQL…VQAQ). The disordered stretch occupies residues 1156-1181 (EQMGSGTQEHASHLQTQLAEQQRRTQ). Residues 1159–1175 (GSGTQEHASHLQTQLAE) are compositionally biased toward polar residues. Residues 1202–1278 (QEQYEKLMAS…EQRQKSAEKK (77 aa)) are a coiled coil.

Its subcellular location is the cytoplasm. The protein localises to the cytoskeleton. It localises to the microtubule organizing center. It is found in the centrosome. Required for the intracellular transport of organelles and vesicles, and is essential for the photoreceptor's outer segments formation, maintenance and function. This is Ninein-like protein (Ninl) from Danio rerio (Zebrafish).